Here is a 99-residue protein sequence, read N- to C-terminus: Small integral membrane protein 14 (99 aa).

The Lumenal portion of the chain corresponds to 1-49; that stretch reads MAEGGFDPCECVCSHEHAMRRLINLLRQSQSYCTDTECLQELPGPSGDN. A helical membrane pass occupies residues 50–70; it reads GISVTMILVAWMVIALILFLL. The Cytoplasmic portion of the chain corresponds to 71 to 99; the sequence is RPPNLRGSSLPGKPTSPHNGQDPPAPPVD. Positions 78 to 99 are disordered; that stretch reads SSLPGKPTSPHNGQDPPAPPVD.

The protein resides in the endoplasmic reticulum membrane. The sequence is that of Small integral membrane protein 14 (SMIM14) from Homo sapiens (Human).